Consider the following 120-residue polypeptide: Ribosome-binding factor A (120 aa).

Belongs to the RbfA family. As to quaternary structure, monomer. Binds 30S ribosomal subunits, but not 50S ribosomal subunits or 70S ribosomes.

The protein resides in the cytoplasm. Functionally, one of several proteins that assist in the late maturation steps of the functional core of the 30S ribosomal subunit. Associates with free 30S ribosomal subunits (but not with 30S subunits that are part of 70S ribosomes or polysomes). Required for efficient processing of 16S rRNA. May interact with the 5'-terminal helix region of 16S rRNA. This chain is Ribosome-binding factor A, found in Chlamydia caviae (strain ATCC VR-813 / DSM 19441 / 03DC25 / GPIC) (Chlamydophila caviae).